Here is a 263-residue protein sequence, read N- to C-terminus: Acetylglutamate kinase (263 aa).

Residues 48–49, arginine 70, and asparagine 162 contribute to the substrate site; that span reads GG.

Belongs to the acetylglutamate kinase family. ArgB subfamily.

It is found in the cytoplasm. It catalyses the reaction N-acetyl-L-glutamate + ATP = N-acetyl-L-glutamyl 5-phosphate + ADP. It functions in the pathway amino-acid biosynthesis; L-arginine biosynthesis; N(2)-acetyl-L-ornithine from L-glutamate: step 2/4. In terms of biological role, catalyzes the ATP-dependent phosphorylation of N-acetyl-L-glutamate. The chain is Acetylglutamate kinase from Vibrio parahaemolyticus serotype O3:K6 (strain RIMD 2210633).